We begin with the raw amino-acid sequence, 177 residues long: ATP synthase subunit delta (177 aa).

It belongs to the ATPase delta chain family. In terms of assembly, F-type ATPases have 2 components, F(1) - the catalytic core - and F(0) - the membrane proton channel. F(1) has five subunits: alpha(3), beta(3), gamma(1), delta(1), epsilon(1). F(0) has three main subunits: a(1), b(2) and c(10-14). The alpha and beta chains form an alternating ring which encloses part of the gamma chain. F(1) is attached to F(0) by a central stalk formed by the gamma and epsilon chains, while a peripheral stalk is formed by the delta and b chains.

The protein resides in the cell inner membrane. Its function is as follows. F(1)F(0) ATP synthase produces ATP from ADP in the presence of a proton or sodium gradient. F-type ATPases consist of two structural domains, F(1) containing the extramembraneous catalytic core and F(0) containing the membrane proton channel, linked together by a central stalk and a peripheral stalk. During catalysis, ATP synthesis in the catalytic domain of F(1) is coupled via a rotary mechanism of the central stalk subunits to proton translocation. This protein is part of the stalk that links CF(0) to CF(1). It either transmits conformational changes from CF(0) to CF(1) or is implicated in proton conduction. This chain is ATP synthase subunit delta, found in Haemophilus influenzae (strain PittGG).